We begin with the raw amino-acid sequence, 150 residues long: Putative antitoxin VapB45 (150 aa).

Positions 124–150 are disordered; sequence AQRPVAAGRPRPRPQRPVSDRVSDQRR. Residues 141-150 are compositionally biased toward basic and acidic residues; sequence VSDRVSDQRR.

It belongs to the phD/YefM antitoxin family.

Possibly the antitoxin component of a type II toxin-antitoxin (TA) system. Its cognate toxin is VapC45 (Potential). The sequence is that of Putative antitoxin VapB45 (vapB45) from Mycobacterium tuberculosis (strain CDC 1551 / Oshkosh).